The primary structure comprises 286 residues: Cytochrome c oxidase subunit 3 (286 aa).

Transmembrane regions (helical) follow at residues 13–33 (GVFL…GVVI), 40–60 (VGTF…CFLI), 85–105 (IIQY…VVFF), 133–153 (IILD…NIIL), 173–195 (LCRE…LLFI), 199–221 (VWEF…LFSI), 223–243 (TLHF…IFNI), and 253–273 (IVLI…WFFL).

Belongs to the cytochrome c oxidase subunit 3 family. In terms of assembly, component of the cytochrome c oxidase (complex IV, CIV), a multisubunit enzyme composed of a catalytic core of 3 subunits and several supernumerary subunits. The complex exists as a monomer or a dimer and forms supercomplexes (SCs) in the inner mitochondrial membrane with ubiquinol-cytochrome c oxidoreductase (cytochrome b-c1 complex, complex III, CIII).

It is found in the mitochondrion inner membrane. The catalysed reaction is 4 Fe(II)-[cytochrome c] + O2 + 8 H(+)(in) = 4 Fe(III)-[cytochrome c] + 2 H2O + 4 H(+)(out). Functionally, component of the cytochrome c oxidase, the last enzyme in the mitochondrial electron transport chain which drives oxidative phosphorylation. The respiratory chain contains 3 multisubunit complexes succinate dehydrogenase (complex II, CII), ubiquinol-cytochrome c oxidoreductase (cytochrome b-c1 complex, complex III, CIII) and cytochrome c oxidase (complex IV, CIV), that cooperate to transfer electrons derived from NADH and succinate to molecular oxygen, creating an electrochemical gradient over the inner membrane that drives transmembrane transport and the ATP synthase. Cytochrome c oxidase is the component of the respiratory chain that catalyzes the reduction of oxygen to water. Electrons originating from reduced cytochrome c in the intermembrane space (IMS) are transferred via the dinuclear copper A center (CU(A)) of subunit 2 and heme A of subunit 1 to the active site in subunit 1, a binuclear center (BNC) formed by heme A3 and copper B (CU(B)). The BNC reduces molecular oxygen to 2 water molecules using 4 electrons from cytochrome c in the IMS and 4 protons from the mitochondrial matrix. In Trypanoplasma borreli, this protein is Cytochrome c oxidase subunit 3 (COIII).